The chain runs to 83 residues: MVKLRLKRYGRKQQPTYRIIAIDAKNRREGKALKELGFYNPIKNSIQLDVQNIILFLKNGAKPTDTVFDILNKHQVFEQMKKE.

It belongs to the bacterial ribosomal protein bS16 family.

It localises to the plastid. Its subcellular location is the chloroplast. The protein is Small ribosomal subunit protein bS16c of Chaetosphaeridium globosum (Charophycean green alga).